Here is an 830-residue protein sequence, read N- to C-terminus: ABC transporter G family member STR (830 aa).

At 1-551 (MAKFKRTDTN…RTTLNVIRTP (551 aa)) the chain is on the cytoplasmic side. Residues 46 to 297 (LEFNNLSYSV…LAGFARPVPD (252 aa)) form the ABC transporter domain. Position 90 to 97 (90 to 97 (GPSGAGKS)) interacts with ATP. Disordered stretches follow at residues 333–356 (DQAA…PYAK), 368–422 (SHFS…SMQS), and 471–491 (SMSS…NKTP). The segment covering 368-378 (SHFSTGNMNSQ) has biased composition (polar residues). Residues 395–405 (DYEDDDDEDEF) show a composition bias toward acidic residues. The span at 471-483 (SMSSSQFSMTQQT) shows a compositional bias: low complexity. The chain crosses the membrane as a helical span at residues 552–572 (ELFLSREIVLTVMGLVLSSFF). Residues 573–588 (KKLSHFDFKTINHLLN) are Extracellular-facing. A helical membrane pass occupies residues 589-609 (FYIFTICLVFFSSNDAVPTFI). Residues 610–630 (QERFIFIRETSHNAYRASSYV) lie on the Cytoplasmic side of the membrane. A helical membrane pass occupies residues 631-651 (ISSLIVYLPFFAIQGFTFAGI). Over 652 to 661 (TQYILHLNSS) the chain is Extracellular. Asparagine 659 carries N-linked (GlcNAc...) asparagine glycosylation. A helical membrane pass occupies residues 662–682 (ILSFWLILYSSLVTSNAYVML). Residues 683–690 (VSALVPSY) are Cytoplasmic-facing. A helical membrane pass occupies residues 691-711 (ITGYAVVIATTALFFLTCGFF). Over 712–798 (LKRTQIPLVW…LFSMDIREEN (87 aa)) the chain is Extracellular. N-linked (GlcNAc...) asparagine glycans are attached at residues asparagine 771 and asparagine 780. Residues 799 to 819 (IWLDIVILLAWGVLYRLFFYV) traverse the membrane as a helical segment. The Cytoplasmic portion of the chain corresponds to 820–830 (VLRFYSKNERK).

Belongs to the ABC transporter superfamily. ABCG family. Stunted arbuscule (STR) subfamily. In terms of assembly, heterodimerizes with STR2; the resulting transporter is located in the peri-arbuscular membrane.

Its subcellular location is the cell membrane. Together with STR2, required for arbuscule development in arbuscular mycorrhizal (AM) symbiosis. This Petunia hybrida (Petunia) protein is ABC transporter G family member STR.